The following is a 503-amino-acid chain: Maturase K (503 aa).

This sequence belongs to the intron maturase 2 family. MatK subfamily.

It is found in the plastid. It localises to the chloroplast. Usually encoded in the trnK tRNA gene intron. Probably assists in splicing its own and other chloroplast group II introns. The polypeptide is Maturase K (Syzygium australe (Brush cherry)).